Consider the following 120-residue polypeptide: C-C motif chemokine 27 (120 aa).

Positions 1–25 (MMEGLSPASSLPLLLLLLSPAPEAA) are cleaved as a signal peptide. 2 disulfide bridges follow: C34–C63 and C35–C78.

This sequence belongs to the intercrine beta (chemokine CC) family. Monomer, dimer, and tetramer. Heparin avidly promotes oligomerization. Interacts with TNFAIP6 (via Link domain). Isoform 1 is predominantly expressed in placenta and weakly in skin. Isoform 2 is predominantly expressed in testes and brain, weakly in kidney and liver and even lower in heart and muscle. Low expression of both isoforms in other tissues.

Its subcellular location is the secreted. The protein localises to the nucleus. Functionally, chemotactic factor that attracts skin-associated memory T-lymphocytes. May play a role in mediating homing of lymphocytes to cutaneous sites. May play a role in cell migration during embryogenesis. Nuclear forms may facilitate cellular migration by inducing cytoskeletal relaxation. Binds to CCR10. This is C-C motif chemokine 27 (Ccl27) from Mus musculus (Mouse).